We begin with the raw amino-acid sequence, 357 residues long: Probable cinnamyl alcohol dehydrogenase 2 (357 aa).

C47 serves as a coordination point for Zn(2+). S49 lines the NADP(+) pocket. Positions 69, 70, 100, 103, 106, 114, and 163 each coordinate Zn(2+). NADP(+) is bound by residues T167, 188–193 (GLGGVG), 211–216 (SSSNKK), T251, G275, and 298–300 (SFI).

Belongs to the zinc-containing alcohol dehydrogenase family. As to quaternary structure, homodimer. Zn(2+) serves as cofactor. The N-terminus is blocked.

The catalysed reaction is (E)-cinnamyl alcohol + NADP(+) = (E)-cinnamaldehyde + NADPH + H(+). It catalyses the reaction (E)-coniferol + NADP(+) = (E)-coniferaldehyde + NADPH + H(+). The enzyme catalyses (E)-sinapyl alcohol + NADP(+) = (E)-sinapaldehyde + NADPH + H(+). It carries out the reaction (E)-4-coumaroyl alcohol + NADP(+) = (E)-4-coumaraldehyde + NADPH + H(+). The catalysed reaction is (E)-caffeyl alcohol + NADP(+) = (E)-caffeyl aldehyde + NADPH + H(+). Its pathway is aromatic compound metabolism; phenylpropanoid biosynthesis. Involved in lignin biosynthesis. Catalyzes the final step specific for the production of lignin monomers. Catalyzes the NADPH-dependent reduction of coniferaldehyde, 5-hydroxyconiferaldehyde, sinapaldehyde, 4-coumaraldehyde and caffeyl aldehyde to their respective alcohols. The polypeptide is Probable cinnamyl alcohol dehydrogenase 2 (CAD19) (Nicotiana tabacum (Common tobacco)).